The sequence spans 444 residues: uncharacterized protein (444 aa).

The 69-residue stretch at 1-69 (MEKYMSLLTR…PKSGYYIVKK (69 aa)) folds into the HTH gntR-type domain. A DNA-binding region (H-T-H motif) is located at residues 29–48 (IRQLSARYQVSKSTVIRALQ). An N6-(pyridoxal phosphate)lysine modification is found at lysine 286.

It in the C-terminal section; belongs to the class-I pyridoxal-phosphate-dependent aminotransferase family. Pyridoxal 5'-phosphate is required as a cofactor.

This is an uncharacterized protein from Bacillus subtilis (strain 168).